A 315-amino-acid chain; its full sequence is Olfactory receptor 3A1 (315 aa).

The Extracellular segment spans residues 1–28; sequence MQPESGANGTVIAEFILLGLLEAPGLQP. N8 carries an N-linked (GlcNAc...) asparagine glycan. The helical transmembrane segment at 29–52 threads the bilayer; the sequence is VVFVLFLFAYLVTVGGNLSILAAV. Residues 53–60 lie on the Cytoplasmic side of the membrane; it reads LVEPELHT. A helical transmembrane segment spans residues 61–82; the sequence is PMYFFLGNLSVLDVGCISVTVP. Residues 83 to 103 lie on the Extracellular side of the membrane; the sequence is SMLSRLLSRKRAVPCGACLTQ. The cysteines at positions 100 and 192 are disulfide-linked. The chain crosses the membrane as a helical span at residues 104–123; the sequence is LFFFHLFVGVDCFLLIAMAY. Residues 124-143 lie on the Cytoplasmic side of the membrane; the sequence is DRFLAICRPLTYSTRMSQTV. The helical transmembrane segment at 144-161 threads the bilayer; the sequence is QRMLVAASWACAFTNALT. Residues 162 to 199 lie on the Extracellular side of the membrane; the sequence is HTVAMSTLNFCGPNVINHFYCDLPQLCQLSCSSTQLSE. A helical transmembrane segment spans residues 200–223; that stretch reads LLLFAVGFIMAGTSMALIVISYIH. Residues 224 to 240 lie on the Cytoplasmic side of the membrane; the sequence is VAAAVLRIRSVEGRKKA. Residues 241–264 traverse the membrane as a helical segment; sequence FSTCGSHLTVVAIFYGSGIFNYMR. Over 265-275 the chain is Extracellular; the sequence is LGSTKLSDKDK. A helical membrane pass occupies residues 276-295; sequence AVGIFNTVINPMLNPIIYSF. The Cytoplasmic portion of the chain corresponds to 296–315; sequence RNPDVQSAIWRMLTGRRSLA.

It belongs to the G-protein coupled receptor 1 family.

It localises to the cell membrane. Odorant receptor. This is Olfactory receptor 3A1 (OR3A1) from Gorilla gorilla gorilla (Western lowland gorilla).